Reading from the N-terminus, the 462-residue chain is L-seryl-tRNA(Sec) selenium transferase (462 aa).

Residue Lys-294 is modified to N6-(pyridoxal phosphate)lysine.

This sequence belongs to the SelA family. In terms of assembly, homodecamer; pentamer of dimers. Binds only one seryl-tRNA(Sec) per dimer. Pyridoxal 5'-phosphate serves as cofactor.

It is found in the cytoplasm. The catalysed reaction is L-seryl-tRNA(Sec) + selenophosphate + H(+) = L-selenocysteinyl-tRNA(Sec) + phosphate. It functions in the pathway aminoacyl-tRNA biosynthesis; selenocysteinyl-tRNA(Sec) biosynthesis; selenocysteinyl-tRNA(Sec) from L-seryl-tRNA(Sec) (bacterial route): step 1/1. In terms of biological role, converts seryl-tRNA(Sec) to selenocysteinyl-tRNA(Sec) required for selenoprotein biosynthesis. This Yersinia enterocolitica serotype O:8 / biotype 1B (strain NCTC 13174 / 8081) protein is L-seryl-tRNA(Sec) selenium transferase.